A 278-amino-acid polypeptide reads, in one-letter code: HTH-type transcriptional activator RhaS (278 aa).

In terms of domain architecture, HTH araC/xylS-type spans 174 to 272; the sequence is NQLMAWLEDH…NWSPRDIRQG (99 aa). 2 consecutive DNA-binding regions (H-T-H motif) follow at residues 191–212 and 239–262; these read EAVA…KQHT and VTEI…RREF.

In terms of assembly, binds DNA as a dimer.

It localises to the cytoplasm. Functionally, activates expression of the rhaBAD and rhaT operons. This chain is HTH-type transcriptional activator RhaS, found in Salmonella arizonae (strain ATCC BAA-731 / CDC346-86 / RSK2980).